Here is a 197-residue protein sequence, read N- to C-terminus: Recombination protein RecR (197 aa).

The segment at 56-71 (CNVCFHFSADPICEIC) adopts a C4-type zinc-finger fold. A Toprim domain is found at 79–173 (QTICVVADSR…KVTRIAFGLP (95 aa)).

It belongs to the RecR family.

In terms of biological role, may play a role in DNA repair. It seems to be involved in an RecBC-independent recombinational process of DNA repair. It may act with RecF and RecO. The sequence is that of Recombination protein RecR from Rippkaea orientalis (strain PCC 8801 / RF-1) (Cyanothece sp. (strain PCC 8801)).